We begin with the raw amino-acid sequence, 764 residues long: Thyrotropin receptor (764 aa).

The first 21 residues, 1–21, serve as a signal peptide directing secretion; the sequence is MSLTPLLQLALLLALPRSLRG. Topologically, residues 22-413 are extracellular; sequence KGCPSPPCEC…EFNPCEDIMG (392 aa). Cysteines 31 and 41 form a disulfide. Asn77 and Asn99 each carry an N-linked (GlcNAc...) asparagine glycan. LRR repeat units lie at residues 125–150, 151–174, 176–199, 201–223, 225–248, and 250–271; these read LPLL…VYST, DVFF…AFQG, CNET…AFNG, KLDA…AFGG, FSGP…GLEH, and KELI…SFLH. N-linked (GlcNAc...) asparagine glycans are attached at residues Asn177 and Asn198. A glycan (N-linked (GlcNAc...) asparagine) is linked at Asn302. Tyr385 is modified (sulfotyrosine). The chain crosses the membrane as a helical span at residues 414–441; the sequence is YRFLRIVVWFVSLLALLGNVFVLVILLT. Residues 442–450 are Cytoplasmic-facing; that stretch reads SHYKLTVPR. Residues 451 to 473 traverse the membrane as a helical segment; the sequence is FLMCNLAFADFCMGMYLLLIASV. Topologically, residues 474–494 are extracellular; sequence DLYTQSEYYNHAIDWQTGPGC. The cysteines at positions 494 and 569 are disulfide-linked. The helical transmembrane segment at 495–517 threads the bilayer; it reads NTAGFFTVFASELSVYTLTVITL. Over 518–537 the chain is Cytoplasmic; it reads ERWYAITFAMRLDRKIRLRH. Residues 538–560 form a helical membrane-spanning segment; it reads AYAIMAGGWVCCFLLALLPLVGI. Topologically, residues 561-580 are extracellular; it reads SSYAKVSICLPMDTETPLAL. A helical transmembrane segment spans residues 581-602; sequence AYIILVLLLNIVAFTIVCSCYV. The Cytoplasmic portion of the chain corresponds to 603 to 625; it reads KIYITVRNPQYNPGDKDTKIAKR. The helical transmembrane segment at 626–649 threads the bilayer; the sequence is MAVLIFTDFMCMAPISFYALSALM. Topologically, residues 650–660 are extracellular; the sequence is NKPLITVTNSK. The chain crosses the membrane as a helical span at residues 661–682; it reads ILLVLFYPLNSCANPFLYAIFT. At 683–764 the chain is on the cytoplasmic side; that stretch reads KAFQRDVFIL…ISKEYKQPVL (82 aa). Positions 762-764 match the PDZ-binding motif; sequence PVL.

This sequence belongs to the G-protein coupled receptor 1 family. FSH/LSH/TSH subfamily. In terms of assembly, interacts with heterodimer GPHA2:GPHB5; this interaction stimulates cAMP production. Interacts (via the PDZ-binding motif) with SCRIB; regulates TSHR trafficking and function. Post-translationally, glycosylated. In terms of processing, sulfated. Sulfation on Tyr-385 plays a role in thyrotropin receptor binding and activation. Expressed in thyroide cells (at protein level).

The protein localises to the cell membrane. It localises to the basolateral cell membrane. Receptor for the thyroid-stimulating hormone (TSH) or thyrotropin. Also acts as a receptor for the heterodimeric glycoprotein hormone (GPHA2:GPHB5) or thyrostimulin. The activity of this receptor is mediated by G proteins which activate adenylate cyclase. Plays a central role in controlling thyroid cell metabolism. The polypeptide is Thyrotropin receptor (TSHR) (Sus scrofa (Pig)).